The primary structure comprises 623 residues: Glutathione import ATP-binding protein GsiA (623 aa).

2 consecutive ABC transporter domains span residues 15–269 (VENL…RALL) and 314–564 (LRVR…RKLL). ATP-binding positions include 49 to 56 (GESGSGKS) and 357 to 364 (GESGSGKS).

It belongs to the ABC transporter superfamily. Glutathione importer (TC 3.A.1.5.11) family. In terms of assembly, the complex is composed of two ATP-binding proteins (GsiA), two transmembrane proteins (GsiC and GsiD) and a solute-binding protein (GsiB).

Its subcellular location is the cell inner membrane. The enzyme catalyses glutathione(out) + ATP + H2O = glutathione(in) + ADP + phosphate + H(+). Part of the ABC transporter complex GsiABCD involved in glutathione import. Responsible for energy coupling to the transport system. This chain is Glutathione import ATP-binding protein GsiA, found in Shigella flexneri.